Consider the following 148-residue polypeptide: Insoluble matrix shell protein 1 (148 aa).

Residues 105–128 (KSGRTEARNTDDSGDPIIDPRTAD) are disordered.

Component of the acid-insoluble organic matrix of the calcified shell.

The protein localises to the secreted. In Ruditapes philippinarum (Japanese carpet shell), this protein is Insoluble matrix shell protein 1.